We begin with the raw amino-acid sequence, 78 residues long: Large ribosomal subunit protein bL28 (78 aa).

Residues 1-23 are disordered; it reads MSRVCQVSGKRVQTGNNVSHANN. Residues 11 to 22 are compositionally biased toward polar residues; the sequence is RVQTGNNVSHAN.

It belongs to the bacterial ribosomal protein bL28 family.

The protein is Large ribosomal subunit protein bL28 of Xanthomonas campestris pv. campestris (strain 8004).